A 734-amino-acid chain; its full sequence is Photosystem I P700 chlorophyll a apoprotein A2 (734 aa).

The next 8 helical transmembrane spans lie at 46–69 (IFAS…FHVA), 135–158 (LYTG…LHLQ), 175–199 (LNHH…HVAI), 273–291 (MAHH…GHMY), 330–353 (LHFQ…QHMY), 369–395 (AALY…IFFI), 417–439 (AIIS…LYVH), and 517–535 (FLVH…LILV). 2 residues coordinate [4Fe-4S] cluster: C559 and C568. 2 consecutive transmembrane segments (helical) span residues 575-596 (AFYL…YWHW) and 643-665 (LSVW…MFLI). Chlorophyll a is bound by residues H654, M662, and Y670. W671 contributes to the phylloquinone binding site. The helical transmembrane segment at 707–727 (LVGLAHFSVGYIFTYAAFLIA) threads the bilayer.

The protein belongs to the PsaA/PsaB family. The PsaA/B heterodimer binds the P700 chlorophyll special pair and subsequent electron acceptors. PSI consists of a core antenna complex that captures photons, and an electron transfer chain that converts photonic excitation into a charge separation. The eukaryotic PSI reaction center is composed of at least 11 subunits. The cofactor is P700 is a chlorophyll a/chlorophyll a' dimer, A0 is one or more chlorophyll a, A1 is one or both phylloquinones and FX is a shared 4Fe-4S iron-sulfur center..

It is found in the plastid. The protein localises to the chloroplast thylakoid membrane. The catalysed reaction is reduced [plastocyanin] + hnu + oxidized [2Fe-2S]-[ferredoxin] = oxidized [plastocyanin] + reduced [2Fe-2S]-[ferredoxin]. PsaA and PsaB bind P700, the primary electron donor of photosystem I (PSI), as well as the electron acceptors A0, A1 and FX. PSI is a plastocyanin-ferredoxin oxidoreductase, converting photonic excitation into a charge separation, which transfers an electron from the donor P700 chlorophyll pair to the spectroscopically characterized acceptors A0, A1, FX, FA and FB in turn. Oxidized P700 is reduced on the lumenal side of the thylakoid membrane by plastocyanin. The sequence is that of Photosystem I P700 chlorophyll a apoprotein A2 from Daucus carota (Wild carrot).